The sequence spans 267 residues: FCS-Like Zinc finger 8 (267 aa).

Disordered stretches follow at residues M1–P29 and D124–R156. Polar residues-rich tracts occupy residues E15–T28 and P126–P141. The FLZ-type zinc-finger motif lies at S221 to D265.

It belongs to the FLZ family. In terms of assembly, interacts with KIN10 and KIN11 via its FLZ-type zinc finger domain. Interacts with KINB1, KINB2, KINB3 and SNF4 via its N-terminal part. Interacts with HB21/ZHD3.

Functionally, may act as an adapter to facilitate the interaction of SnRK1 complex with effector proteins, conferring tissue- and stimulus-type specific differences in the SnRK1 regulation pathway. In Arabidopsis thaliana (Mouse-ear cress), this protein is FCS-Like Zinc finger 8.